A 323-amino-acid chain; its full sequence is tRNA dimethylallyltransferase (323 aa).

An ATP-binding site is contributed by 16-23; that stretch reads GPTASGKT. 18–23 is a substrate binding site; the sequence is TASGKT. Interaction with substrate tRNA regions lie at residues 41–44, 165–169, 253–258, and 286–293; these read DSAL, QRIQR, RCVGYR, and KRQITWLR.

It belongs to the IPP transferase family. Monomer. Mg(2+) serves as cofactor.

The catalysed reaction is adenosine(37) in tRNA + dimethylallyl diphosphate = N(6)-dimethylallyladenosine(37) in tRNA + diphosphate. Its function is as follows. Catalyzes the transfer of a dimethylallyl group onto the adenine at position 37 in tRNAs that read codons beginning with uridine, leading to the formation of N6-(dimethylallyl)adenosine (i(6)A). In Ralstonia nicotianae (strain ATCC BAA-1114 / GMI1000) (Ralstonia solanacearum), this protein is tRNA dimethylallyltransferase.